Reading from the N-terminus, the 82-residue chain is RNA-binding protein Hfq (82 aa).

The region spanning 11 to 71 (DTFLNSVRKS…ISTIMPAQPV (61 aa)) is the Sm domain.

It belongs to the Hfq family. In terms of assembly, homohexamer.

Functionally, RNA chaperone that binds small regulatory RNA (sRNAs) and mRNAs to facilitate mRNA translational regulation in response to envelope stress, environmental stress and changes in metabolite concentrations. Also binds with high specificity to tRNAs. This is RNA-binding protein Hfq from Caulobacter sp. (strain K31).